We begin with the raw amino-acid sequence, 225 residues long: ATP-dependent Clp protease proteolytic subunit (225 aa).

The active-site Nucleophile is S123. H148 is an active-site residue.

It belongs to the peptidase S14 family. As to quaternary structure, fourteen ClpP subunits assemble into 2 heptameric rings which stack back to back to give a disk-like structure with a central cavity, resembling the structure of eukaryotic proteasomes.

The protein resides in the cytoplasm. The catalysed reaction is Hydrolysis of proteins to small peptides in the presence of ATP and magnesium. alpha-casein is the usual test substrate. In the absence of ATP, only oligopeptides shorter than five residues are hydrolyzed (such as succinyl-Leu-Tyr-|-NHMec, and Leu-Tyr-Leu-|-Tyr-Trp, in which cleavage of the -Tyr-|-Leu- and -Tyr-|-Trp bonds also occurs).. Cleaves peptides in various proteins in a process that requires ATP hydrolysis. Has a chymotrypsin-like activity. Plays a major role in the degradation of misfolded proteins. This chain is ATP-dependent Clp protease proteolytic subunit, found in Chlorobium luteolum (strain DSM 273 / BCRC 81028 / 2530) (Pelodictyon luteolum).